A 113-amino-acid polypeptide reads, in one-letter code: Ig heavy chain V-III region T957 (113 aa).

Residues Glu-1–Val-113 enclose the Ig-like domain. Cys-22 and Cys-98 are oxidised to a cystine.

The sequence is that of Ig heavy chain V-III region T957 from Mus musculus (Mouse).